The sequence spans 253 residues: DNA repair protein RecO (253 aa).

This sequence belongs to the RecO family.

Involved in DNA repair and RecF pathway recombination. The polypeptide is DNA repair protein RecO (Streptococcus agalactiae serotype III (strain NEM316)).